Consider the following 237-residue polypeptide: AA9 family lytic polysaccharide monooxygenase C (237 aa).

Positions 1 to 15 (MKVLAPLILAGAASA) are cleaved as a signal peptide. Cu(2+) is bound by residues His16 and His99. 2 disulfide bridges follow: Cys54/Cys185 and Cys155/Cys237. N-linked (GlcNAc...) asparagine glycosylation is present at Asn112. Positions 171 and 180 each coordinate O2. Tyr182 is a Cu(2+) binding site.

This sequence belongs to the polysaccharide monooxygenase AA9 family. Requires Cu(2+) as cofactor.

Its subcellular location is the secreted. It carries out the reaction [(1-&gt;4)-beta-D-glucosyl]n+m + reduced acceptor + O2 = 4-dehydro-beta-D-glucosyl-[(1-&gt;4)-beta-D-glucosyl]n-1 + [(1-&gt;4)-beta-D-glucosyl]m + acceptor + H2O.. Is able to utilize various natural phenolic compounds as reducing agents. Most of these reducing agents are present in plants, either free or as lignin building blocks, such as sinapic acid, or as flavonoids such as catechin and dopamine. Phenolic compounds with 1,2-benzenediol and 1,2,3-benzenetriol moieties yield the highest release of oxidized and non-oxidized glucooligosaccharides from cellulose compared to monophenols or sulfur-containing compounds. Lytic polysaccharide monooxygenase (LPMO) that depolymerizes crystalline and amorphous polysaccharides via the oxidation of scissile alpha- or beta-(1-4)-glycosidic bonds, yielding C4 oxidation products. Catalysis by LPMOs requires the reduction of the active-site copper from Cu(II) to Cu(I) by a reducing agent and H(2)O(2) or O(2) as a cosubstrate. Shows oxidative cleavage of beta-(1-3, 1-4)-glucan from oat spelt or xyloglucan from tamarind seed, in addition to cellulose. This chain is AA9 family lytic polysaccharide monooxygenase C, found in Thermothelomyces thermophilus (strain ATCC 42464 / BCRC 31852 / DSM 1799) (Sporotrichum thermophile).